Here is a 231-residue protein sequence, read N- to C-terminus: UPF0749 protein YlxW (231 aa).

The first 34 residues, 1-34 (MRGKSAVLLSLIMLIAGFLISFSFQMTKENNKSA), serve as a signal peptide directing secretion. Residues 44–94 (YALRDELLKQEKENKKFEKELYQKQNKVRQAENKLKKEKSEYYNVLEDTEK) are a coiled coil.

This sequence belongs to the UPF0749 family.

May be involved in cell division and sporulation. The chain is UPF0749 protein YlxW (ylxW) from Bacillus subtilis (strain 168).